The sequence spans 286 residues: MTALTESSTSKFVKINEKGFSDFQIHYNEAGNGETVIMLHGGGPGAGGWSNYYRNIGAFVEAGYRVILKDSPGFNKSDAVVMDEQRGLVNARAVKGLMDALDIDRAHLVGNSMGGATALNFALEYPDRIGKLILMGPGGLGPSMFAPMPMEGIKLLFKLYAEPSYETLKQMLQVFLYDQSLITEELLQGRWEAIQRNPEHLKNFLVSAQKAPLSTWDVSARLGEIKAKTFITWGRDDRFVPLDHGLKLVWGINDARLHVFSKCGHWAQWEHADEFNRLVIDFLRHA.

Substrate is bound by residues 42 to 43 (GG), asparagine 51, asparagine 111, serine 180, and arginine 190. Histidine 265 acts as the Proton acceptor in catalysis. Substrate is bound at residue tryptophan 266.

Belongs to the AB hydrolase superfamily. BphD family. In terms of assembly, homodimer.

It carries out the reaction 2,6-dioxo-6-phenylhexa-3-enoate + H2O = 2-oxopent-4-enoate + benzoate + H(+). The protein operates within xenobiotic degradation; biphenyl degradation; 2-hydroxy-2,4-pentadienoate and benzoate from biphenyl: step 4/4. Catalyzes an unusual C-C bond hydrolysis of 2-hydroxy-6-oxo-6-phenylhexa-2,4-dienoic acid (HOPDA) to produce benzoic acid and 2-hydroxy-2,4-pentadienoic acid (HPD). This Polaromonas naphthalenivorans (strain CJ2) protein is 2-hydroxy-6-oxo-6-phenylhexa-2,4-dienoate hydrolase.